Consider the following 81-residue polypeptide: ATP synthase subunit c (81 aa).

A run of 2 helical transmembrane segments spans residues 7-27 (FVALAAGLIIGLGAIGACIGI) and 53-73 (FLLAGLIDAAFLIGVGIAMMF).

The protein belongs to the ATPase C chain family. F-type ATPases have 2 components, F(1) - the catalytic core - and F(0) - the membrane proton channel. F(1) has five subunits: alpha(3), beta(3), gamma(1), delta(1), epsilon(1). F(0) has three main subunits: a(1), b(2) and c(10-14). The alpha and beta chains form an alternating ring which encloses part of the gamma chain. F(1) is attached to F(0) by a central stalk formed by the gamma and epsilon chains, while a peripheral stalk is formed by the delta and b chains.

The protein resides in the cell inner membrane. In terms of biological role, f(1)F(0) ATP synthase produces ATP from ADP in the presence of a proton or sodium gradient. F-type ATPases consist of two structural domains, F(1) containing the extramembraneous catalytic core and F(0) containing the membrane proton channel, linked together by a central stalk and a peripheral stalk. During catalysis, ATP synthesis in the catalytic domain of F(1) is coupled via a rotary mechanism of the central stalk subunits to proton translocation. Functionally, key component of the F(0) channel; it plays a direct role in translocation across the membrane. A homomeric c-ring of between 10-14 subunits forms the central stalk rotor element with the F(1) delta and epsilon subunits. The chain is ATP synthase subunit c from Azoarcus sp. (strain BH72).